Reading from the N-terminus, the 546-residue chain is Sodium/hydrogen exchanger 2 (546 aa).

The Cytoplasmic segment spans residues 1–21 (MTMFASLTSKMLSVSTSDHAS). Residues 22–42 (VVSLNLFVALLCACIVIGHLL) traverse the membrane as a helical segment. Residues 43-47 (EENRW) lie on the Vacuolar side of the membrane. A helical transmembrane segment spans residues 48–68 (MNESITALLIGLGTGVVILLI). Residues 69–75 (SRGKNSH) are Cytoplasmic-facing. Positions 76–96 (LLVFSEDLFFIYLLPPIIFNA) form an intramembrane region, helical. At 97-111 (GFQVKKKQFFRNFVT) the chain is on the cytoplasmic side. Residues 112–132 (IMAFGAIGTVVSCTIISLGAI) traverse the membrane as a helical segment. Residues 133–148 (QFFKKLDIGTFDLGDF) are Vacuolar-facing. Intramembrane regions (helical) lie at residues 149–168 (LAIG…QVLN) and 174–194 (LLYS…VVLF). Residues 195–218 (NAIQSFDLTHLNHEAAFQFLGNFF) lie on the Vacuolar side of the membrane. The helical transmembrane segment at 219 to 239 (YLFLLSTGLGVATGLISAYVI) threads the bilayer. Topologically, residues 240–264 (KKLYFGRHSTDREVALMMLMAYLSY) are cytoplasmic. The chain crosses the membrane as a helical span at residues 265-285 (MLAELFALSGILTVFFCGIVM). At 286-304 (SHYTWHNVTESSRITTKHA) the chain is on the vacuolar side. The N-linked (GlcNAc...) asparagine glycan is linked to Asn-292. A helical transmembrane segment spans residues 305 to 325 (FATLSFLAETFIFLYVGMDAL). At 326–344 (DIEKWRFVSDSPGTSVAVS) the chain is on the cytoplasmic side. The chain crosses the membrane as a helical span at residues 345–365 (SILMGLVMLGRAAFVFPLSFL). Residues 366-381 (SNLAKKHQSEKISIKQ) are Vacuolar-facing. A helical transmembrane segment spans residues 382-402 (QVVIWWAGLMRGAVSMALAYN). The Cytoplasmic portion of the chain corresponds to 403–415 (KFTRSGHTELRGN). The chain crosses the membrane as a helical span at residues 416 to 436 (AIMITSTITVCLFSTMVFGML). Topologically, residues 437–546 (TKPLIRYLMP…ERSSHDLSKP (110 aa)) are vacuolar.

Belongs to the monovalent cation:proton antiporter 1 (CPA1) transporter (TC 2.A.36) family. In terms of tissue distribution, expressed in roots and shoots.

It localises to the vacuole membrane. The catalysed reaction is Na(+)(in) + H(+)(out) = Na(+)(out) + H(+)(in). It catalyses the reaction K(+)(in) + H(+)(out) = K(+)(out) + H(+)(in). In terms of biological role, acts in low affinity electroneutral exchange of protons for cations such as Na(+) or K(+) across membranes. May also exchange Li(+) and Cs(+) with a lower affinity. Involved in vacuolar ion compartmentalization necessary for cell volume regulation and cytoplasmic Na(+) detoxification. The polypeptide is Sodium/hydrogen exchanger 2 (NHX2) (Arabidopsis thaliana (Mouse-ear cress)).